The sequence spans 548 residues: Sesquiterpene synthase 12 (548 aa).

Residues aspartate 299, aspartate 303, aspartate 444, and glutamate 452 each coordinate Mg(2+). Residues 299–303 (DDTFD) carry the DDXXD motif motif.

It belongs to the terpene synthase family. Tpsa subfamily. It depends on Mg(2+) as a cofactor. Mn(2+) is required as a cofactor. In terms of tissue distribution, mostly expressed in leaves, to a lower extent in stems, trichomes, flowers and roots and, at low levels, in fruits.

It carries out the reaction (2E,6E)-farnesyl diphosphate = alpha-humulene + diphosphate. The catalysed reaction is (2E,6E)-farnesyl diphosphate = (-)-(E)-beta-caryophyllene + diphosphate. It catalyses the reaction (2Z,6Z)-farnesyl diphosphate = beta-bisabolene + diphosphate. The enzyme catalyses (2E)-geranyl diphosphate = terpinolene + diphosphate. It carries out the reaction (2E)-geranyl diphosphate = limonene + diphosphate. The catalysed reaction is (2E)-geranyl diphosphate = beta-myrcene + diphosphate. It catalyses the reaction (2E)-geranyl diphosphate = (E)-beta-ocimene + diphosphate. The enzyme catalyses (2Z,6Z)-farnesyl diphosphate = gamma-curcumene + diphosphate. It carries out the reaction (2Z,6Z)-farnesyl diphosphate = (Z)-gamma-bisabolene + diphosphate. It participates in secondary metabolite biosynthesis; terpenoid biosynthesis. In terms of biological role, sesquiterpene synthase involved in the biosynthesis of volatile compounds. Mediates the conversion of (2E,6E)-farnesyl diphosphate (FPP) into (1E,4E,8E)-alpha-humulene and (-)-(E)-beta-caryophyllene, and of (2Z,6Z)-farnesyl diphosphate ((ZZ)-FPP) into beta-bisabolene, gamma-curcumene and (Z)-gamma-bisabolene. Can act with a low efficiency as a monoterpene synthase with geranyl diphosphate (GPP) as substrate, thus producing beta-myrcene, (E)-beta-ocimene, limonene and terpinolene. This Solanum lycopersicum (Tomato) protein is Sesquiterpene synthase 12.